A 739-amino-acid chain; its full sequence is Adenosylcobalamin-dependent ribonucleoside-triphosphate reductase (739 aa).

Cys119 and Cys419 are disulfide-bonded. The tract at residues 147-158 (SMPFSFLFDELM) is effector region-1. The tract at residues 168 to 313 (ARSNISQIPR…ICNLIGKAVV (146 aa)) is effector region-2. Residues Cys408 and Glu410 contribute to the active site. Positions 565–626 (FHYGAYLIQR…NPNFASAGTV (62 aa)) are adenosylcobalamin-binding-1. Residues 685–724 (LQQAPKEPIDKETYEKRSQEITGNVEEVFSQLNSDVKDLE) form an adenosylcobalamin-binding-2 region.

This sequence belongs to the class II ribonucleoside-triphosphate reductase family. In terms of assembly, monomer. Requires adenosylcob(III)alamin as cofactor.

It carries out the reaction a 2'-deoxyribonucleoside 5'-triphosphate + [thioredoxin]-disulfide + H2O = a ribonucleoside 5'-triphosphate + [thioredoxin]-dithiol. Its activity is regulated as follows. Allosterically regulated by ATP and dNTP. This is Adenosylcobalamin-dependent ribonucleoside-triphosphate reductase (rtpR) from Lactobacillus leichmannii.